Here is a 325-residue protein sequence, read N- to C-terminus: Protease HtpX homolog (325 aa).

Residues 20-40 (IGYLLGGGGGMMIALVIAVAM) traverse the membrane as a helical segment. His-130 is a Zn(2+) binding site. The active site involves Glu-131. Position 134 (His-134) interacts with Zn(2+). 2 consecutive transmembrane segments (helical) span residues 145–165 (IVAT…FLGG) and 173–193 (VMGV…AMIV). Residue Glu-202 coordinates Zn(2+). Residues 288-325 (AMTARAAAPSQNSGPWGQRSDNAGGNSNGGSRYRGPWS) are disordered. A compositionally biased stretch (low complexity) spans 306–325 (RSDNAGGNSNGGSRYRGPWS).

The protein belongs to the peptidase M48B family. It depends on Zn(2+) as a cofactor.

It is found in the cell inner membrane. In Brucella suis (strain ATCC 23445 / NCTC 10510), this protein is Protease HtpX homolog.